The primary structure comprises 262 residues: Nurim (262 aa).

Topologically, residues 1–4 are nuclear; it reads MAPA. The chain crosses the membrane as a helical span at residues 5-28; it reads LLLVPAALASFILAFGTGVEFVRF. Over 29 to 58 the chain is Perinuclear space; sequence TSLRPLLGGIPESGGPDARQGWLAALQDQS. A helical membrane pass occupies residues 59-80; the sequence is ILVPLAWDLGLLLLFVGQHSLM. Over 81-97 the chain is Nuclear; that stretch reads ATETVKAWMSRYFGVLQ. Residues 98 to 114 traverse the membrane as a helical segment; the sequence is RSLYVACTALALQLVMR. The Perinuclear space portion of the chain corresponds to 115–133; sequence YWEPVPRGPVLWEAQAEPW. The helical transmembrane segment at 134–164 threads the bilayer; sequence ATWVPLLCFVLHVISWLLIFSILLVFDYAEL. Residues 165–191 are Nuclear-facing; the sequence is MGLKQVYYHVLGLGEPLALKSPRALRL. The chain crosses the membrane as a helical span at residues 192–210; the sequence is FSHLRHPVCVELLTVLWVV. Residues 211–216 are Perinuclear space-facing; that stretch reads PTLGTD. Residues 217-234 form a helical membrane-spanning segment; the sequence is RLLLALLLTLYLGLAHGL. The Nuclear segment spans residues 235 to 262; sequence DQQDLRYLRAQLQRKLHLLSRPQDGEAE.

The protein belongs to the nurim family.

The protein localises to the nucleus inner membrane. This is Nurim (NRM) from Sus scrofa (Pig).